The chain runs to 483 residues: PAT complex subunit CCDC47 (483 aa).

The first 20 residues, 1–20 (MKAFYAFCVVLLVFGSVSEA), serve as a signal peptide directing secretion. The Cytoplasmic portion of the chain corresponds to 21–135 (KFDDFEDEED…PAHLQNSWES (115 aa)). Residues 46-119 (MEDSVTESPQ…DTSSNKNKDP (74 aa)) form a disordered region. The span at 60–104 (TEDDEDEATVELEGQDESQEGDFEDADTQEGDTESEPYDDEEFEG) shows a compositional bias: acidic residues. Over residues 105-118 (YEDKPDTSSNKNKD) the composition is skewed to basic and acidic residues. A helical membrane pass occupies residues 136-156 (YYLEILMVTGLLAYIMNYIIG). Over 157 to 483 (KNKNSRLAQA…KMKQIKVKAM (327 aa)) the chain is Lumenal. The N-linked (GlcNAc...) asparagine glycan is linked to Asn-178. A disordered region spans residues 424–483 (QRQEAAQSRREEKKRAEKERIMNEEDPEKQRRLEEAALRREQKKLEKKQMKMKQIKVKAM). Positions 430 to 472 (QSRREEKKRAEKERIMNEEDPEKQRRLEEAALRREQKKLEKKQ) are enriched in basic and acidic residues. The stretch at 450 to 483 (PEKQRRLEEAALRREQKKLEKKQMKMKQIKVKAM) forms a coiled coil. Residues 473 to 483 (MKMKQIKVKAM) are compositionally biased toward basic residues.

This sequence belongs to the CCDC47 family. In terms of assembly, component of the PAT complex, composed of WDR83OS/Asterix and CCDC47. The PAT complex is part of the multi-pass translocon (MPT) complex, composed of three subcomplexes, the GEL complex (composed of RAB5IF/OPTI and TMCO1), the BOS complex (composed of NCLN/Nicalin, NOMO1 and TMEM147) and the PAT complex (composed of WDR83OS/Asterix and CCDC47). The MPT complex associates with the SEC61 complex. Interacts with VCP, HSPA5, DERL1, DERL2 and SELENOS. In terms of tissue distribution, in the embryo, expressed in the endodermal layer of the yolk sac and in the small intestine.

The protein localises to the endoplasmic reticulum membrane. It is found in the rough endoplasmic reticulum membrane. Component of the multi-pass translocon (MPT) complex that mediates insertion of multi-pass membrane proteins into the lipid bilayer of membranes. The MPT complex takes over after the SEC61 complex: following membrane insertion of the first few transmembrane segments of proteins by the SEC61 complex, the MPT complex occludes the lateral gate of the SEC61 complex to promote insertion of subsequent transmembrane regions. Within the MPT complex, the PAT subcomplex sequesters any highly polar regions in the transmembrane domains away from the non-polar membrane environment until they can be buried in the interior of the fully assembled protein. Within the PAT subcomplex, CCDC47 occludes the lateral gate of the SEC61 complex. Involved in the regulation of calcium ion homeostasis in the ER. Required for proper protein degradation via the ERAD (ER-associated degradation) pathway. Has an essential role in the maintenance of ER organization during embryogenesis. The protein is PAT complex subunit CCDC47 of Mus musculus (Mouse).